Here is a 261-residue protein sequence, read N- to C-terminus: Cytochrome c oxidase subunit 3 (261 aa).

The next 6 membrane-spanning stretches (helical) occupy residues 31–51, 82–102, 126–146, 159–179, 197–217, and 239–259; these read LVLWFHTGNIILLFTGLLLLI, PMILFITSEVCFFFAFFWAFF, PFLVPLLNTAVLLSSGVTITW, AIQALFLTVVLGIYFTILQAW, FFVATGFHGLHVIIGTTFLLV, and AWYWHFVDVVWLFLYVCIYWW.

This sequence belongs to the cytochrome c oxidase subunit 3 family. In terms of assembly, component of the cytochrome c oxidase (complex IV, CIV), a multisubunit enzyme composed of a catalytic core of 3 subunits and several supernumerary subunits. The complex exists as a monomer or a dimer and forms supercomplexes (SCs) in the inner mitochondrial membrane with ubiquinol-cytochrome c oxidoreductase (cytochrome b-c1 complex, complex III, CIII).

It is found in the mitochondrion inner membrane. The catalysed reaction is 4 Fe(II)-[cytochrome c] + O2 + 8 H(+)(in) = 4 Fe(III)-[cytochrome c] + 2 H2O + 4 H(+)(out). Component of the cytochrome c oxidase, the last enzyme in the mitochondrial electron transport chain which drives oxidative phosphorylation. The respiratory chain contains 3 multisubunit complexes succinate dehydrogenase (complex II, CII), ubiquinol-cytochrome c oxidoreductase (cytochrome b-c1 complex, complex III, CIII) and cytochrome c oxidase (complex IV, CIV), that cooperate to transfer electrons derived from NADH and succinate to molecular oxygen, creating an electrochemical gradient over the inner membrane that drives transmembrane transport and the ATP synthase. Cytochrome c oxidase is the component of the respiratory chain that catalyzes the reduction of oxygen to water. Electrons originating from reduced cytochrome c in the intermembrane space (IMS) are transferred via the dinuclear copper A center (CU(A)) of subunit 2 and heme A of subunit 1 to the active site in subunit 1, a binuclear center (BNC) formed by heme A3 and copper B (CU(B)). The BNC reduces molecular oxygen to 2 water molecules using 4 electrons from cytochrome c in the IMS and 4 protons from the mitochondrial matrix. The protein is Cytochrome c oxidase subunit 3 (COIII) of Paracentrotus lividus (Common sea urchin).